Reading from the N-terminus, the 289-residue chain is Protease HtpX homolog (289 aa).

Helical transmembrane passes span 10–30 (TAAL…VIGS) and 34–54 (STTP…YGYW). H138 serves as a coordination point for Zn(2+). Residue E139 is part of the active site. Position 142 (H142) interacts with Zn(2+). Helical transmembrane passes span 153 to 173 (VAAA…IFGG) and 182 to 202 (LAVM…QSAI). Residue E207 participates in Zn(2+) binding.

Belongs to the peptidase M48B family. The cofactor is Zn(2+).

The protein resides in the cell membrane. The chain is Protease HtpX homolog from Arthrobacter sp. (strain FB24).